The primary structure comprises 493 residues: Ketol-acid reductoisomerase (NADP(+)) (493 aa).

In terms of domain architecture, KARI N-terminal Rossmann spans 15–208; sequence AQLGKCRFMQ…GGDRAGVLES (194 aa). NADP(+) is bound by residues 45–48, Arg68, Arg76, Ser78, and 108–110; these read CGAQ and DKQ. Residue His132 is part of the active site. Gly158 is a binding site for NADP(+). KARI C-terminal knotted domains follow at residues 209–344 and 345–486; these read SFVA…NAPA and FAGK…MKDM. 4 residues coordinate Mg(2+): Asp217, Glu221, Glu389, and Glu393. Residue Ser414 participates in substrate binding.

Belongs to the ketol-acid reductoisomerase family. Requires Mg(2+) as cofactor.

The catalysed reaction is (2R)-2,3-dihydroxy-3-methylbutanoate + NADP(+) = (2S)-2-acetolactate + NADPH + H(+). It carries out the reaction (2R,3R)-2,3-dihydroxy-3-methylpentanoate + NADP(+) = (S)-2-ethyl-2-hydroxy-3-oxobutanoate + NADPH + H(+). The protein operates within amino-acid biosynthesis; L-isoleucine biosynthesis; L-isoleucine from 2-oxobutanoate: step 2/4. It participates in amino-acid biosynthesis; L-valine biosynthesis; L-valine from pyruvate: step 2/4. Involved in the biosynthesis of branched-chain amino acids (BCAA). Catalyzes an alkyl-migration followed by a ketol-acid reduction of (S)-2-acetolactate (S2AL) to yield (R)-2,3-dihydroxy-isovalerate. In the isomerase reaction, S2AL is rearranged via a Mg-dependent methyl migration to produce 3-hydroxy-3-methyl-2-ketobutyrate (HMKB). In the reductase reaction, this 2-ketoacid undergoes a metal-dependent reduction by NADPH to yield (R)-2,3-dihydroxy-isovalerate. The polypeptide is Ketol-acid reductoisomerase (NADP(+)) (Aeromonas hydrophila subsp. hydrophila (strain ATCC 7966 / DSM 30187 / BCRC 13018 / CCUG 14551 / JCM 1027 / KCTC 2358 / NCIMB 9240 / NCTC 8049)).